The chain runs to 148 residues: Large ribosomal subunit protein uL15 (148 aa).

The segment at 1 to 61 (MELNELRPAV…GGQMPMQRRL (61 aa)) is disordered. Residues 30-39 (TATKGHKGQK) are compositionally biased toward basic residues.

It belongs to the universal ribosomal protein uL15 family. As to quaternary structure, part of the 50S ribosomal subunit.

Binds to the 23S rRNA. The chain is Large ribosomal subunit protein uL15 from Geobacter sulfurreducens (strain ATCC 51573 / DSM 12127 / PCA).